The following is a 60-amino-acid chain: Large ribosomal subunit protein bL32 (60 aa).

Belongs to the bacterial ribosomal protein bL32 family.

This is Large ribosomal subunit protein bL32 from Thermosipho melanesiensis (strain DSM 12029 / CIP 104789 / BI429).